The following is a 195-amino-acid chain: Transcription factor LBX2 (195 aa).

Disordered stretches follow at residues methionine 1–threonine 89 and proline 164–aspartate 195. Positions arginine 84–valine 143 form a DNA-binding region, homeobox. The span at leucine 186–aspartate 195 shows a compositional bias: acidic residues.

As to expression, expressed in the developing urogenital system, eye and brain.

It localises to the nucleus. Functionally, transcription factor. The chain is Transcription factor LBX2 (Lbx2) from Mus musculus (Mouse).